The sequence spans 141 residues: uncharacterized protein (141 aa).

In terms of domain architecture, MaoC-like spans 8-112 (IGQVFKTKSL…VLDKQPKRNE (105 aa)).

This is an uncharacterized protein from Bacillus subtilis (strain 168).